The chain runs to 1355 residues: NACHT, LRR and PYD domains-containing protein 1 homolog (1355 aa).

The NACHT domain maps to 257 to 458 (KTVILCGDSG…SVPLLCWMVC (202 aa)). 263–270 (GDSGRGKS) contributes to the ATP binding site. A ZU5 region spans residues 977–1109 (DSDQWVQVEP…FHAKILQPMF (133 aa)). Positions 977–1252 (DSDQWVQVEP…NKTESDLFQS (276 aa)) constitute an FIIND domain. The segment at 1110-1252 (SPKTVLVKLG…NKTESDLFQS (143 aa)) is UPA. Positions 1278-1354 (LIKSVENVDT…NLLNHLPSSD (77 aa)) constitute a CARD domain.

Belongs to the NLRP family. Interacts with the C-terminal part of nlrp1 (NACHT, LRR and PYD domains-containing protein 1, C-terminus) in absence of pathogens and other damage-associated signals. As to quaternary structure, interacts with the N-terminal part of nlrp1 (NACHT, LRR and PYD domains-containing protein 1, N-terminus) in absence of pathogens and other damage-associated signals. Homomultimer; forms the nlrp1 inflammasome polymeric complex, a filament composed of homopolymers of this form in response to pathogens and other damage-associated signals. The nlrp1 inflammasome polymeric complex associates with pycard/asc. Interacts (via CARD domain) with pycard/asc (via CARD domain); leading to pro-inflammatory caspases (caspa and/or caspb) recruitment. Pro-caspase-a and pro-caspase-b filament formation increases local enzyme concentration, resulting in trans-autocleavage and activation. Active caspa and caspb then processes il1b and il18 precursors, leading to the release of mature cytokines in the extracellular milieu and inflammatory response. Autocatalytically cleaved. Autocatalytic cleavage in FIIND region occurs constitutively, prior to activation signals, and is required for inflammasome activity (IL1B release), possibly by facilitating pro-inflammatory caspases (caspa and/or caspb) binding. Both N- and C-terminal parts remain associated non-covalently. In terms of processing, ubiquitinated in response to pathogen-associated signals, leading to its degradation by the proteasome and subsequent release of the cleaved C-terminal part of the protein (NACHT, LRR and PYD domains-containing protein 1, C-terminus), which polymerizes and forms the nlrp1 inflammasome. As to expression, expressed in adult spleen, head kidney, gill and skin and also in the embryo.

Its subcellular location is the cytoplasm. It is found in the inflammasome. With respect to regulation, nlrp1 inflammasome is activated by pathogens and other damage-associated signals: activation promotes ubiquitination and degradation of the N-terminal part, releasing the cleaved C-terminal part of the protein (NACHT, LRR and PYD domains-containing protein 1, C-terminus), which polymerizes and forms the nlrp1 inflammasome. In terms of biological role, acts as the sensor component of the nlrp1 inflammasome, which mediates inflammasome activation in response to various pathogen-associated signals, leading to subsequent pyroptosis. Inflammasomes are supramolecular complexes that assemble in the cytosol in response to pathogens and other damage-associated signals and play critical roles in innate immunity and inflammation. Acts as a recognition receptor (PRR): recognizes specific pathogens and other damage-associated signals, and mediates the formation of the inflammasome polymeric complex. In response to pathogen-associated signals, the N-terminal part of nlrp1 is degraded by the proteasome, releasing the cleaved C-terminal part of the protein (NACHT, LRR and PYD domains-containing protein 1, C-terminus), which polymerizes to initiate the formation of the inflammasome complex: the inflammasome recruits and activate pro-inflammatory caspases (caspa and/or caspb), leading to pyroptosis. Constitutes the precursor of the nlrp1 inflammasome, which mediates autoproteolytic processing within the FIIND domain to generate the N-terminal and C-terminal parts, which are associated non-covalently in absence of pathogens and other damage-associated signals. Its function is as follows. Regulatory part that prevents formation of the nlrp1 inflammasome: in absence of pathogens and other damage-associated signals, interacts with the C-terminal part of nlrp1 (NACHT, LRR and PYD domains-containing protein 1, C-terminus), preventing activation of the nlrp1 inflammasome. In response to pathogen-associated signals, this part is ubiquitinated and degraded by the proteasome, releasing the cleaved C-terminal part of the protein, which polymerizes and forms the nlrp1 inflammasome. Functionally, constitutes the active part of the nlrp1 inflammasome. In absence of pathogens and other damage-associated signals, interacts with the N-terminal part of nlrp1 (NACHT, LRR and PYD domains-containing protein 1, N-terminus), preventing activation of the nlrp1 inflammasome. In response to pathogen-associated signals, the N-terminal part of nlrp1 is degraded by the proteasome, releasing this form, which polymerizes to form the nlrp1 inflammasome complex: the nlrp1 inflammasome complex then directly recruits and activates pro-inflammatory caspases (caspa and/or caspb) activation, leading to subsequent pyroptosis. This Danio rerio (Zebrafish) protein is NACHT, LRR and PYD domains-containing protein 1 homolog.